Here is a 423-residue protein sequence, read N- to C-terminus: MDIDEDEDFYAPDEPQAAPPTTAATTTTPATTTTTAAPTTTTTTTSTTTASAPPTTTSSSTKPEDELEEGEEEDEGGGAMDEDDDSDIDIITERKDGSAPPPPVQSRYSEIRNIPQRAAANDNGVKTAPVKKSDGTNSNSNSSSNKFGGGGGIGNEQKTRQGSGAAGGSGAELPPVRTSKIEVDGIPVYKPVGKPITGVVIDEDLPENDKPWRKPGTDLSDYFNYGFDEFTWALYAQKQEALRGEYNAEAIAANNKKMMEEMTNMMMMGGMMPPGMGGPGGPGVGPAGPGAMGPGGPAGAGGMGGPGGGLDGMPPEMQAMMQQMMGAAAAQGMDPSQMGQMGMAGGPGDMGGMGGMFGGPGGGPGGPGTGGMGPGGPGGQGGQGQQFGGGFGGNQGQGGYGGYDQMGGAGGGGRGGRGRGRRW.

Acidic residues predominate over residues 1–11; it reads MDIDEDEDFYA. 3 disordered regions span residues 1 to 178, 278 to 307, and 360 to 423; these read MDID…PVRT, GPGG…GGPG, and PGGG…GRRW. A compositionally biased stretch (low complexity) spans 19 to 61; the sequence is PPTTAATTTTPATTTTTAAPTTTTTTTSTTTASAPPTTTSSST. Residues 65–90 show a composition bias toward acidic residues; that stretch reads DELEEGEEEDEGGGAMDEDDDSDIDI. The segment covering 135 to 146 has biased composition (low complexity); sequence GTNSNSNSSSNK. The segment covering 360 to 415 has biased composition (gly residues); it reads PGGGPGGPGTGGMGPGGPGGQGGQGQQFGGGFGGNQGQGGYGGYDQMGGAGGGGRG.

Belongs to the FIP1 family.

Its subcellular location is the nucleus. Pre-mRNA polyadenylation factor that directly interacts with poly(A) polymerase. This is Pre-mRNA polyadenylation factor fip-1 (fip-1) from Neurospora crassa (strain ATCC 24698 / 74-OR23-1A / CBS 708.71 / DSM 1257 / FGSC 987).